We begin with the raw amino-acid sequence, 34 residues long: Putative protein YmiB (34 aa).

Residues threonine 7–tryptophan 24 traverse the membrane as a helical segment.

It is found in the membrane. The polypeptide is Putative protein YmiB (ymiB) (Escherichia coli (strain K12)).